We begin with the raw amino-acid sequence, 207 residues long: 8-oxoguanine DNA glycosylase/AP lyase (207 aa).

Residues Lys-129 and Asp-147 contribute to the active site.

Belongs to the type-2 OGG1 family.

It carries out the reaction 2'-deoxyribonucleotide-(2'-deoxyribose 5'-phosphate)-2'-deoxyribonucleotide-DNA = a 3'-end 2'-deoxyribonucleotide-(2,3-dehydro-2,3-deoxyribose 5'-phosphate)-DNA + a 5'-end 5'-phospho-2'-deoxyribonucleoside-DNA + H(+). Functionally, catalyzes the excision of an oxidatively damaged form of guanine (7,8-dihydro-8-oxoguanine = 8-oxoG) from DNA. Also cleaves the DNA backbone at apurinic/apyrimidinic sites (AP sites). The polypeptide is 8-oxoguanine DNA glycosylase/AP lyase (Thermotoga maritima (strain ATCC 43589 / DSM 3109 / JCM 10099 / NBRC 100826 / MSB8)).